The sequence spans 120 residues: Large ribosomal subunit protein uL18 (120 aa).

The tract at residues 1–22 (MKTTRKESLKRRHRRIRRKVSG) is disordered. The segment covering 8–20 (SLKRRHRRIRRKV) has biased composition (basic residues).

This sequence belongs to the universal ribosomal protein uL18 family. As to quaternary structure, part of the 50S ribosomal subunit; part of the 5S rRNA/L5/L18/L25 subcomplex. Contacts the 5S and 23S rRNAs.

Functionally, this is one of the proteins that bind and probably mediate the attachment of the 5S RNA into the large ribosomal subunit, where it forms part of the central protuberance. The protein is Large ribosomal subunit protein uL18 of Crocosphaera subtropica (strain ATCC 51142 / BH68) (Cyanothece sp. (strain ATCC 51142)).